The sequence spans 99 residues: uncharacterized protein (99 aa).

This is an uncharacterized protein from Acidianus bottle-shaped virus (isolate Italy/Pozzuoli) (ABV).